A 26-amino-acid polypeptide reads, in one-letter code: Melittin (26 aa).

The residue at position 1 (glycine 1) is an N-formylglycine; partial. Glutamine 26 bears the Glutamine amide mark.

This sequence belongs to the melittin family. Monomer (in solution and for integration into membranes), homotetramer (in solution and potentially as a toroidal pore in membranes), and potenially homomultimer (as a toroidal pore in membranes). As to expression, expressed by the venom gland.

The protein localises to the secreted. It is found in the target cell membrane. Its function is as follows. Main toxin of bee venom with strong hemolytic activity and antimicrobial activity. It has enhancing effects on bee venom phospholipase A2 activity. This amphipathic toxin binds to negatively charged membrane surface and forms pore by inserting into lipid bilayers inducing the leakage of ions and molecules and the enhancement of permeability that ultimately leads to cell lysis. It acts as a voltage-gated pore with higher selectivity for anions over cations. The ion conductance has been shown to be voltage-dependent. Self-association of melittin in membranes is promoted by high ionic strength, but not by the presence of negatively charged lipids. In vivo, intradermal injection into healthy human volunteers produce sharp pain sensation and an inflammatory response. It produces pain by activating primary nociceptor cells directly and indirectly due to its ability to activate plasma membrane phospholipase A2 and its pore-forming activity. This is Melittin (MELT) from Apis florea (Dwarf honeybee).